We begin with the raw amino-acid sequence, 186 residues long: Translation initiation factor IF-3 (186 aa).

It belongs to the IF-3 family. Monomer.

Its subcellular location is the cytoplasm. Functionally, IF-3 binds to the 30S ribosomal subunit and shifts the equilibrium between 70S ribosomes and their 50S and 30S subunits in favor of the free subunits, thus enhancing the availability of 30S subunits on which protein synthesis initiation begins. The sequence is that of Translation initiation factor IF-3 from Borrelia garinii subsp. bavariensis (strain ATCC BAA-2496 / DSM 23469 / PBi) (Borreliella bavariensis).